We begin with the raw amino-acid sequence, 707 residues long: uncharacterized protein (707 aa).

Disordered regions lie at residues 15-122 (ALAK…LESY) and 667-707 (ESVQ…DIDE). 2 stretches are compositionally biased toward basic and acidic residues: residues 18 to 32 (KKND…DKGI) and 40 to 52 (EGKD…DVEK). A Phosphoserine modification is found at serine 112. A coiled-coil region spans residues 659-700 (EEQRKLIRESVQQDQEHKEQMRQKKKQALKSDDIELDDLSEE). Acidic residues predominate over residues 692–707 (IELDDLSEEEAEDIDE).

Belongs to the NOC2 family.

The protein localises to the nucleus. The protein resides in the nucleolus. This is an uncharacterized protein from Schizosaccharomyces pombe (strain 972 / ATCC 24843) (Fission yeast).